The chain runs to 312 residues: 1-(5-phosphoribosyl)-5-[(5-phosphoribosylamino)methylideneamino] imidazole-4-carboxamide isomerase HISN3, chloroplastic (312 aa).

The N-terminal 67 residues, 1-67 (MRSPASTPSI…IHKGKVKQIV (67 aa)), are a transit peptide targeting the chloroplast. Asp-57 contacts 1-(5-phospho-beta-D-ribosyl)-5-[(5-phospho-beta-D-ribosylamino)methylideneamino]imidazole-4-carboxamide. A 5-[(5-phospho-1-deoxy-D-ribulos-1-ylimino)methylamino]-1-(5-phospho-beta-D-ribosyl)imidazole-4-carboxamide-binding site is contributed by Gln-65. Residues Gln-65 and Ile-66 each contribute to the Na(+) site. Residue Gly-68 coordinates 1-(5-phospho-beta-D-ribosyl)-5-[(5-phospho-beta-D-ribosylamino)methylideneamino]imidazole-4-carboxamide. 5-[(5-phospho-1-deoxy-D-ribulos-1-ylimino)methylamino]-1-(5-phospho-beta-D-ribosyl)imidazole-4-carboxamide contacts are provided by His-108, Gly-138, Thr-158, and Ser-159. 1-(5-phospho-beta-D-ribosyl)-5-[(5-phospho-beta-D-ribosylamino)methylideneamino]imidazole-4-carboxamide is bound by residues Gly-138, Thr-158, and Ser-159. Residues Ser-159 and Phe-162 each contribute to the Na(+) site. The 1-(5-phospho-beta-D-ribosyl)-5-[(5-phospho-beta-D-ribosylamino)methylideneamino]imidazole-4-carboxamide site is built by Asp-187, Arg-203, Trp-204, and His-230. A 5-[(5-phospho-1-deoxy-D-ribulos-1-ylimino)methylamino]-1-(5-phospho-beta-D-ribosyl)imidazole-4-carboxamide-binding site is contributed by Asp-187. Trp-204 is a 5-[(5-phospho-1-deoxy-D-ribulos-1-ylimino)methylamino]-1-(5-phospho-beta-D-ribosyl)imidazole-4-carboxamide binding site. Position 235 (Glu-235) interacts with Na(+). Gly-236, Gly-262, Gly-285, and Ser-286 together coordinate 1-(5-phospho-beta-D-ribosyl)-5-[(5-phospho-beta-D-ribosylamino)methylideneamino]imidazole-4-carboxamide. Gly-236, Gly-262, Gly-285, and Ser-286 together coordinate 5-[(5-phospho-1-deoxy-D-ribulos-1-ylimino)methylamino]-1-(5-phospho-beta-D-ribosyl)imidazole-4-carboxamide.

This sequence belongs to the HisA/HisF family. Requires Na(+) as cofactor.

It localises to the plastid. It is found in the chloroplast. It catalyses the reaction 1-(5-phospho-beta-D-ribosyl)-5-[(5-phospho-beta-D-ribosylamino)methylideneamino]imidazole-4-carboxamide = 5-[(5-phospho-1-deoxy-D-ribulos-1-ylimino)methylamino]-1-(5-phospho-beta-D-ribosyl)imidazole-4-carboxamide. Its pathway is amino-acid biosynthesis; L-histidine biosynthesis; L-histidine from 5-phospho-alpha-D-ribose 1-diphosphate: step 4/9. Functionally, component of the histidine biosynthesis pathway that catalyzes the isomerization of 5'-ProFAR (pro-phosphoribosyl formimino-5-aminoimidazole-4-carboxamide ribonucleotide, referred as 1-(5-phospho-beta-D-ribosyl)-5-[(5-phospho-beta-D-ribosylamino)methylideneamino]imidazole-4-carboxamide) to PrFAR (phosphoribulosyl formimino-5-aminoimidazole-4-carboxamide ribonucleotide, referred as 5-[(5-phospho-1-deoxy-D-ribulos-1-ylimino)methylamino]-1-(5-phospho-beta-D-ribosyl)imidazole-4-carboxamide). The sequence is that of 1-(5-phosphoribosyl)-5-[(5-phosphoribosylamino)methylideneamino] imidazole-4-carboxamide isomerase HISN3, chloroplastic from Medicago truncatula (Barrel medic).